The following is a 607-amino-acid chain: BTB/POZ domain-containing protein DOT3 (607 aa).

A BTB domain is found at 52–121 (TDLSIQVNDI…CYNLPLDLNP (70 aa)). An NPH3 domain is found at 211–487 (RCLYNDIATL…VQINTQVLFS (277 aa)). Residue Y428 is modified to Phosphotyrosine. 2 disordered regions span residues 498–520 (DKLP…SRDN) and 573–607 (KSFQ…MSMS). 2 stretches are compositionally biased toward basic and acidic residues: residues 499 to 520 (KLPE…SRDN) and 577 to 586 (TKREDEETRE). The stretch at 511-563 (REDKRMSRDNEIIKTLKEELENVKKKMSELQSDYNELQQEYERLSSKQKSSHN) forms a coiled coil.

This sequence belongs to the NPH3 family. Expressed in emerging leaf primordia.

It functions in the pathway protein modification; protein ubiquitination. May act as a substrate-specific adapter of an E3 ubiquitin-protein ligase complex (CUL3-RBX1-BTB) which mediates the ubiquitination and subsequent proteasomal degradation of target proteins. Involved in leaf vasculature patterning. The polypeptide is BTB/POZ domain-containing protein DOT3 (Arabidopsis thaliana (Mouse-ear cress)).